The following is a 466-amino-acid chain: Arginine biosynthesis bifunctional protein ArgJ, mitochondrial (466 aa).

Substrate is bound by residues Thr-194, Lys-223, Thr-234, Glu-321, Asn-461, and Thr-466. The active-site Nucleophile is Thr-234.

It belongs to the ArgJ family. Heterodimer of an alpha and a beta chain. In terms of processing, the alpha and beta chains are autoproteolytically processed from a single precursor protein within the mitochondrion.

The protein resides in the mitochondrion matrix. It catalyses the reaction N(2)-acetyl-L-ornithine + L-glutamate = N-acetyl-L-glutamate + L-ornithine. It carries out the reaction L-glutamate + acetyl-CoA = N-acetyl-L-glutamate + CoA + H(+). It participates in amino-acid biosynthesis; L-arginine biosynthesis; L-ornithine and N-acetyl-L-glutamate from L-glutamate and N(2)-acetyl-L-ornithine (cyclic): step 1/1. Its pathway is amino-acid biosynthesis; L-arginine biosynthesis; N(2)-acetyl-L-ornithine from L-glutamate: step 1/4. Catalyzes two activities which are involved in the cyclic version of arginine biosynthesis: the synthesis of acetylglutamate from glutamate and acetyl-CoA, and of ornithine by transacetylation between acetylornithine and glutamate. This Aspergillus flavus (strain ATCC 200026 / FGSC A1120 / IAM 13836 / NRRL 3357 / JCM 12722 / SRRC 167) protein is Arginine biosynthesis bifunctional protein ArgJ, mitochondrial.